We begin with the raw amino-acid sequence, 357 residues long: Alanine racemase (357 aa).

Lysine 35 acts as the Proton acceptor; specific for D-alanine in catalysis. Lysine 35 carries the N6-(pyridoxal phosphate)lysine modification. Residue arginine 128 coordinates substrate. The active-site Proton acceptor; specific for L-alanine is tyrosine 254. Position 302 (methionine 302) interacts with substrate.

It belongs to the alanine racemase family. Pyridoxal 5'-phosphate is required as a cofactor.

It carries out the reaction L-alanine = D-alanine. Its pathway is amino-acid biosynthesis; D-alanine biosynthesis; D-alanine from L-alanine: step 1/1. In terms of biological role, catalyzes the interconversion of L-alanine and D-alanine. May also act on other amino acids. This chain is Alanine racemase (alr), found in Marinobacter nauticus (strain ATCC 700491 / DSM 11845 / VT8) (Marinobacter aquaeolei).